The primary structure comprises 206 residues: Probable chemoreceptor glutamine deamidase CheD (206 aa).

The protein belongs to the CheD family.

The catalysed reaction is L-glutaminyl-[protein] + H2O = L-glutamyl-[protein] + NH4(+). Its function is as follows. Probably deamidates glutamine residues to glutamate on methyl-accepting chemotaxis receptors (MCPs), playing an important role in chemotaxis. The sequence is that of Probable chemoreceptor glutamine deamidase CheD from Laribacter hongkongensis (strain HLHK9).